The sequence spans 191 residues: Protein Ves (191 aa).

It belongs to the Ves family.

This chain is Protein Ves, found in Shigella flexneri serotype 5b (strain 8401).